An 877-amino-acid chain; its full sequence is Leucine--tRNA ligase (877 aa).

The 'HIGH' region signature appears at Pro43–His53. Residues Lys628–Ser632 carry the 'KMSKS' region motif. Lys631 lines the ATP pocket.

It belongs to the class-I aminoacyl-tRNA synthetase family.

Its subcellular location is the cytoplasm. It carries out the reaction tRNA(Leu) + L-leucine + ATP = L-leucyl-tRNA(Leu) + AMP + diphosphate. In Brucella canis (strain ATCC 23365 / NCTC 10854 / RM-666), this protein is Leucine--tRNA ligase.